The primary structure comprises 305 residues: Tyrosine recombinase XerC (305 aa).

Positions 2-88 (NQLELYIDTF…TLRSFYRFLE (87 aa)) constitute a Core-binding (CB) domain. The Tyr recombinase domain occupies 109-294 (PVPGFLYQEE…TKDHLREAYM (186 aa)). Residues arginine 149, lysine 173, histidine 246, arginine 249, and histidine 272 contribute to the active site. The active-site O-(3'-phospho-DNA)-tyrosine intermediate is tyrosine 281.

This sequence belongs to the 'phage' integrase family. XerC subfamily. In terms of assembly, forms a cyclic heterotetrameric complex composed of two molecules of XerC and two molecules of XerD.

Its subcellular location is the cytoplasm. In terms of biological role, site-specific tyrosine recombinase, which acts by catalyzing the cutting and rejoining of the recombining DNA molecules. The XerC-XerD complex is essential to convert dimers of the bacterial chromosome into monomers to permit their segregation at cell division. It also contributes to the segregational stability of plasmids. The polypeptide is Tyrosine recombinase XerC (Oceanobacillus iheyensis (strain DSM 14371 / CIP 107618 / JCM 11309 / KCTC 3954 / HTE831)).